Consider the following 184-residue polypeptide: Oligoribonuclease (184 aa).

An Exonuclease domain is found at 10–172 (LVWVDCEMTG…ADVLESIAEL (163 aa)). Y129 is an active-site residue.

Belongs to the oligoribonuclease family.

Its subcellular location is the cytoplasm. Functionally, 3'-to-5' exoribonuclease specific for small oligoribonucleotides. The polypeptide is Oligoribonuclease (Tropheryma whipplei (strain Twist) (Whipple's bacillus)).